Here is a 990-residue protein sequence, read N- to C-terminus: Protein argonaute 7 (990 aa).

Residues 1–13 show a composition bias toward basic residues; sequence MEEKTHHHHHSTN. The tract at residues 1–25 is disordered; sequence MEEKTHHHHHSTNKHIPSSKSRTPL. One can recognise a PAZ domain in the interval 379–484; it reads EFLTDLPRNK…LPMELCMICE (106 aa). The 302-residue stretch at 649–950 folds into the Piwi domain; it reads LIICVMEKKH…AAYRGRLYIE (302 aa). The disordered stretch occupies residues 953 to 973; it reads SESNGGSMNPSSVSRVGPPKT. A compositionally biased stretch (polar residues) spans 954 to 966; it reads ESNGGSMNPSSVS.

Belongs to the argonaute family. Ago subfamily. In terms of tissue distribution, expressed in leaves and floral buds, and at low levels in roots.

Involved in RNA-mediated post-transcriptional gene silencing (PTGS). Main component of the RNA-induced silencing complex (RISC) that binds to a short guide RNA such as a microRNA (miRNA) or small interfering RNA (siRNA). RISC uses the mature miRNA or siRNA as a guide for slicer-directed cleavage of homologous mRNAs to repress gene expression. Required for the processing of 21 nucleotide trans-acting siRNAs (ta-siRNAs) derived from TAS3a transcripts. Associates preferentially with the microRNA (miRNA) miR390 which guides the cleavage of TAS3 precursor RNA. Seems to act as miR390 specific slicer. Associates mainly with small RNAs of 21 nucleotide in length and with a 5' terminal adenosine. Acts in the RDR6/SGS3/DCL4/AGO7 trans-acting siRNA pathway involved in leaf developmental timing. Does not seem to act on leaf polarity. Required for the production of the 30-40nt bacterial-induced long siRNAs (lsiRNA). Involved in antiviral RNA silencing by contributing to efficient viral RNAs clearance. Targets less structured viral RNAs than AGO1 which is capable of targeting RNAs with more compact structures. The chain is Protein argonaute 7 (AGO7) from Arabidopsis thaliana (Mouse-ear cress).